The following is a 190-amino-acid chain: Glutamyl-tRNA(Gln) amidotransferase subunit F, mitochondrial (190 aa).

This sequence belongs to the GatF family. In terms of assembly, subunit of the heterotrimeric GatFAB amidotransferase (AdT) complex, composed of A, B and F subunits.

It localises to the mitochondrion inner membrane. The catalysed reaction is L-glutamyl-tRNA(Gln) + L-glutamine + ATP + H2O = L-glutaminyl-tRNA(Gln) + L-glutamate + ADP + phosphate + H(+). In terms of biological role, allows the formation of correctly charged Gln-tRNA(Gln) through the transamidation of misacylated Glu-tRNA(Gln) in the mitochondria. The reaction takes place in the presence of glutamine and ATP through an activated gamma-phospho-Glu-tRNA(Gln). Required for proper protein synthesis within the mitochondrion. This chain is Glutamyl-tRNA(Gln) amidotransferase subunit F, mitochondrial, found in Eremothecium gossypii (strain ATCC 10895 / CBS 109.51 / FGSC 9923 / NRRL Y-1056) (Yeast).